The sequence spans 152 residues: Large ribosomal subunit protein bL9 (152 aa).

The protein belongs to the bacterial ribosomal protein bL9 family.

Its function is as follows. Binds to the 23S rRNA. This Thermosynechococcus vestitus (strain NIES-2133 / IAM M-273 / BP-1) protein is Large ribosomal subunit protein bL9.